A 234-amino-acid polypeptide reads, in one-letter code: Probable RNA/DNA demethylase ALKBH6 (234 aa).

The Fe2OG dioxygenase domain occupies 96–222; it reads TANHVLVNEY…RVSLTIRHVP (127 aa). Residues asparagine 103 and tyrosine 105 each coordinate 2-oxoglutarate. Fe cation is bound by residues histidine 114, aspartate 116, and histidine 180. Residues arginine 213 and serine 215 each contribute to the 2-oxoglutarate site.

Belongs to the alkB family. Requires Fe(2+) as cofactor.

It is found in the cytoplasm. Its subcellular location is the nucleus. In terms of biological role, probable Fe(2+)/2-oxoglutarate-dependent dioxygenase involved in oxidative demethylation of nucleic acids. Binds nucleic acids with a preference for ssDNA or ssRNA to other types of DNAs. May play a role in nucleic acid damage repair. The chain is Probable RNA/DNA demethylase ALKBH6 (alkbh6) from Danio rerio (Zebrafish).